The chain runs to 347 residues: Ketol-acid reductoisomerase (NADP(+)) (347 aa).

In terms of domain architecture, KARI N-terminal Rossmann spans 3 to 182; sequence TKMFYDKDID…GSGRAGILET (180 aa). Residues 26-29, Arg49, Ser53, and 83-86 each bind NADP(+); these read YGAQ and DELQ. His108 is an active-site residue. Gly134 is a binding site for NADP(+). The region spanning 183–328 is the KARI C-terminal knotted domain; that stretch reads TFEEETTEDL…KKVRAMMPWI (146 aa). Positions 191, 195, 227, and 231 each coordinate Mg(2+). Ser252 serves as a coordination point for substrate.

Belongs to the ketol-acid reductoisomerase family. It depends on Mg(2+) as a cofactor.

It carries out the reaction (2R)-2,3-dihydroxy-3-methylbutanoate + NADP(+) = (2S)-2-acetolactate + NADPH + H(+). The enzyme catalyses (2R,3R)-2,3-dihydroxy-3-methylpentanoate + NADP(+) = (S)-2-ethyl-2-hydroxy-3-oxobutanoate + NADPH + H(+). Its pathway is amino-acid biosynthesis; L-isoleucine biosynthesis; L-isoleucine from 2-oxobutanoate: step 2/4. It functions in the pathway amino-acid biosynthesis; L-valine biosynthesis; L-valine from pyruvate: step 2/4. Functionally, involved in the biosynthesis of branched-chain amino acids (BCAA). Catalyzes an alkyl-migration followed by a ketol-acid reduction of (S)-2-acetolactate (S2AL) to yield (R)-2,3-dihydroxy-isovalerate. In the isomerase reaction, S2AL is rearranged via a Mg-dependent methyl migration to produce 3-hydroxy-3-methyl-2-ketobutyrate (HMKB). In the reductase reaction, this 2-ketoacid undergoes a metal-dependent reduction by NADPH to yield (R)-2,3-dihydroxy-isovalerate. This chain is Ketol-acid reductoisomerase (NADP(+)), found in Leuconostoc mesenteroides subsp. mesenteroides (strain ATCC 8293 / DSM 20343 / BCRC 11652 / CCM 1803 / JCM 6124 / NCDO 523 / NBRC 100496 / NCIMB 8023 / NCTC 12954 / NRRL B-1118 / 37Y).